Here is a 312-residue protein sequence, read N- to C-terminus: Zinc transporter ZitB (312 aa).

5 helical membrane passes run 21 to 41 (LLFA…GGIL), 48 to 68 (LADA…LLVV), 90 to 110 (AAFV…WEAI), 123 to 143 (LMMV…WILH), and 164 to 184 (LLGS…GWTP).

It belongs to the cation diffusion facilitator (CDF) transporter (TC 2.A.4) family. SLC30A subfamily.

It is found in the cell inner membrane. Functionally, involved in zinc efflux across the cytoplasmic membrane, thus reducing zinc accumulation in the cytoplasm and rendering bacteria more resistant to zinc. It may contribute to zinc homeostasis at low concentrations of zinc. This Salmonella typhi protein is Zinc transporter ZitB.